The chain runs to 154 residues: Plastocyanin, chloroplastic (154 aa).

Residues 1 to 57 (MAALSSAAVTIPSMAPSAPGRRRMRSSLVVRASLGKAAGAAAVAVAASAMLAGGAMA) constitute a chloroplast transit peptide. A Plastocyanin-like domain is found at 58-154 (QEVLLGANGG…AGMVGKVTVN (97 aa)). 4 residues coordinate Cu cation: H94, C139, H142, and M147.

This sequence belongs to the plastocyanin family. Cu(2+) is required as a cofactor.

Its subcellular location is the plastid. It localises to the chloroplast thylakoid membrane. Functionally, participates in electron transfer between P700 and the cytochrome b6-f complex in photosystem I. The sequence is that of Plastocyanin, chloroplastic (PETE) from Oryza sativa subsp. indica (Rice).